The primary structure comprises 318 residues: DNA-directed RNA polymerase subunit alpha 2 (318 aa).

The segment at 1–227 (MALENLLHPT…NQLRNILDIE (227 aa)) is alpha N-terminal domain (alpha-NTD). The alpha C-terminal domain (alpha-CTD) stretch occupies residues 242 to 318 (INPILLKHVE…TLIENWPQDL (77 aa)).

The protein belongs to the RNA polymerase alpha chain family. Homodimer. The RNAP catalytic core consists of 2 alpha, 1 beta, 1 beta' and 1 omega subunit. When a sigma factor is associated with the core the holoenzyme is formed, which can initiate transcription.

It carries out the reaction RNA(n) + a ribonucleoside 5'-triphosphate = RNA(n+1) + diphosphate. Its function is as follows. DNA-dependent RNA polymerase catalyzes the transcription of DNA into RNA using the four ribonucleoside triphosphates as substrates. This Francisella tularensis subsp. tularensis (strain FSC 198) protein is DNA-directed RNA polymerase subunit alpha 2.